The sequence spans 243 residues: NAD-dependent protein deacylase (243 aa).

A Deacetylase sirtuin-type domain is found at 1–234; that stretch reads MYQHIVVLTG…PKLVDTILAG (234 aa). 10–29 lines the NAD(+) pocket; sequence GAGISAESGLRTFRDQDGLW. Residues tyrosine 54 and arginine 57 each contribute to the substrate site. An NAD(+)-binding site is contributed by 91–94; the sequence is QNID. The active-site Proton acceptor is the histidine 109. Cysteine 117 and cysteine 136 together coordinate Zn(2+). Residues 176 to 178, 202 to 204, and alanine 220 each bind NAD(+); these read GTS and NLQ.

It belongs to the sirtuin family. Class III subfamily. Zn(2+) serves as cofactor.

It is found in the cytoplasm. It catalyses the reaction N(6)-acetyl-L-lysyl-[protein] + NAD(+) + H2O = 2''-O-acetyl-ADP-D-ribose + nicotinamide + L-lysyl-[protein]. The enzyme catalyses N(6)-succinyl-L-lysyl-[protein] + NAD(+) + H2O = 2''-O-succinyl-ADP-D-ribose + nicotinamide + L-lysyl-[protein]. In terms of biological role, NAD-dependent lysine deacetylase and desuccinylase that specifically removes acetyl and succinyl groups on target proteins. Modulates the activities of several proteins which are inactive in their acylated form. The sequence is that of NAD-dependent protein deacylase from Shewanella oneidensis (strain ATCC 700550 / JCM 31522 / CIP 106686 / LMG 19005 / NCIMB 14063 / MR-1).